The following is a 267-amino-acid chain: Large ribosomal subunit protein mL57 (267 aa).

Residues 43–54 show a composition bias toward low complexity; the sequence is SSSAVQQEQDAS. Residues 43–73 are disordered; that stretch reads SSSAVQQEQDASGTSSSQQPRPRWSYTPERM.

This sequence belongs to the ribonuclease III family. Mitochondrion-specific ribosomal protein mL57 subfamily. Component of the mitochondrial large ribosomal subunit (mt-LSU). Mature N.crassa 74S mitochondrial ribosomes consist of a small (37S) and a large (54S) subunit. The 37S small subunit contains a 16S ribosomal RNA (16S mt-rRNA) and 32 different proteins. The 54S large subunit contains a 23S rRNA (23S mt-rRNA) and 42 different proteins. mL57 forms a heterodimer with mL44 and stabilizes rRNA expansion segments 1/2 at a membrane-facing protuberance close to the point of attachment of the ribosome to the translocon in the membrane.

It localises to the mitochondrion. Component of the mitochondrial ribosome (mitoribosome), a dedicated translation machinery responsible for the synthesis of mitochondrial genome-encoded proteins, including at least some of the essential transmembrane subunits of the mitochondrial respiratory chain. The mitoribosomes are attached to the mitochondrial inner membrane and translation products are cotranslationally integrated into the membrane. The polypeptide is Large ribosomal subunit protein mL57 (mrpl15) (Neurospora crassa (strain ATCC 24698 / 74-OR23-1A / CBS 708.71 / DSM 1257 / FGSC 987)).